The following is a 262-amino-acid chain: Spindlin-1 (262 aa).

A disordered region spans residues 1 to 51 (MKTPFGKTPGQRSRADAGHAGVSANMMKKRTSHKKHRSSVGPSKPVSQPRR). Glycyl lysine isopeptide (Lys-Gly) (interchain with G-Cter in SUMO2) cross-links involve residues lysine 7 and lysine 28. A compositionally biased stretch (basic residues) spans 27–38 (MKKRTSHKKHRS). Lysine 44 carries the N6-acetyllysine; alternate modification. Lysine 44 is covalently cross-linked (Glycyl lysine isopeptide (Lys-Gly) (interchain with G-Cter in SUMO2); alternate). Residues 53–116 (IVGCRIQHGW…RVSALEVLPD (64 aa)) are tudor-like domain 1. The interval 93-98 (GFDCVY) is histone H3K4me3 and H3R8me2a binding. Residues serine 109 and serine 124 each carry the phosphoserine; by AURKA modification. The tudor-like domain 2 stretch occupies residues 132–193 (MIGKAVEHMF…DYKEGDLRIM (62 aa)). Glutamate 142 is a region of interest (histone H3K4me3 and H3R8me2a binding). Phosphoserine is present on serine 199. Residues 213–262 (LVGKQVEYAKEDGSKRTGMVIHQVEAKPSVYFIKFDDDFHIYVYDLVKTS) are tudor-like domain 3. The histone H3K4me3 and H3R8me2a binding stretch occupies residues 250–252 (DFH).

It belongs to the SPIN/STSY family. Homodimer; may form higher-order oligomers. Interacts with TCF7L2/TCF4; the interaction is direct. Interacts with HABP4 and SERBP1. Interacts with SPINDOC; SPINDOC stabilizes SPIN1 and enhances its association with bivalent H3K4me3K9me3 mark. Interacts with SPOCD1; promoting recruitment of PIWIL4 and SPOCD1 to transposons. Phosphorylated during oocyte meiotic maturation. In terms of tissue distribution, highly expressed in ovarian cancer tissues.

It localises to the nucleus. It is found in the nucleolus. Its function is as follows. Chromatin reader that specifically recognizes and binds histone H3 both trimethylated at 'Lys-4' and 'Lys-9' (H3K4me3K9me3) and is involved in piRNA-mediated retrotransposon silencing during spermatogenesis. Plays a key role in the initiation of the PIWIL4-piRNA pathway, a pathway that directs transposon DNA methylation and silencing in the male embryonic germ cells, by promoting recruitment of DNA methylation machinery to transposons: binds young, but not old, LINE1 transposons, which are specifically marked with H3K4me3K9me3, and promotes the recruitment of PIWIL4 and SPOCD1 to transposons, leading to piRNA-directed DNA methylation. Also recognizes and binds histone H3 both trimethylated at 'Lys-4' and asymmetrically dimethylated at 'Arg-8' (H3K4me3 and H3R8me2a) and acts as an activator of Wnt signaling pathway downstream of PRMT2. In case of cancer, promotes cell cancer proliferation via activation of the Wnt signaling pathway. Overexpression induces metaphase arrest and chromosomal instability. Localizes to active rDNA loci and promotes the expression of rRNA genes. May play a role in cell-cycle regulation during the transition from gamete to embryo. Involved in oocyte meiotic resumption, a process that takes place before ovulation to resume meiosis of oocytes blocked in prophase I: may act by regulating maternal transcripts to control meiotic resumption. The polypeptide is Spindlin-1 (Homo sapiens (Human)).